Consider the following 769-residue polypeptide: CO(2)-response secreted protease (769 aa).

Residues 1 to 27 (MKGITFFTPFLSFLYLLCILFMTETEA) form the signal peptide. Residues 35–108 (VYIVYMGSAS…VFPDPHFQLH (74 aa)) enclose the Inhibitor I9 domain. Residues 112–613 (SWDFLKYQTS…AGELSSTASM (502 aa)) enclose the Peptidase S8 domain. Residues aspartate 145 and histidine 210 each act as charge relay system in the active site. In terms of domain architecture, PA spans 381–465 (ADASEGSARA…SKEAAEIFSY (85 aa)). Serine 546 acts as the Charge relay system in catalysis.

Belongs to the peptidase S8 family. Expressed in roots, guard cells and meristemoid and pavement cells.

It is found in the secreted. Its subcellular location is the cell wall. It carries out the reaction Release of an N-terminal tripeptide from a polypeptide.. Its function is as follows. Mediates CO(2)-controlled stomatal development by cleaving peptide EPF2 (AC Q8LC53). Not active on peptides EPF1 (AC Q8S8I4) or stomagen (AC Q9SV72). This is CO(2)-response secreted protease from Arabidopsis thaliana (Mouse-ear cress).